Here is a 375-residue protein sequence, read N- to C-terminus: N-acetyldiaminopimelate deacetylase (375 aa).

Residue aspartate 69 is part of the active site. Glutamate 128 functions as the Proton acceptor in the catalytic mechanism.

It belongs to the peptidase M20A family. N-acetyldiaminopimelate deacetylase subfamily.

The catalysed reaction is N-acetyl-(2S,6S)-2,6-diaminopimelate + H2O = (2S,6S)-2,6-diaminopimelate + acetate. Its pathway is amino-acid biosynthesis; L-lysine biosynthesis via DAP pathway; LL-2,6-diaminopimelate from (S)-tetrahydrodipicolinate (acetylase route): step 3/3. Catalyzes the conversion of N-acetyl-diaminopimelate to diaminopimelate and acetate. The protein is N-acetyldiaminopimelate deacetylase of Priestia megaterium (strain ATCC 12872 / QMB1551) (Bacillus megaterium).